Consider the following 2664-residue polypeptide: MSEMSSFLHIGDIVSLYAEGSVNGFISTLGLVDDRCVVEPAAGDLDNPPKKFRDCLFKVCPMNRYSAQKQYWKAKQTKQDKEKIADVVLLQKLQHAAQMEQKQNDTENKKVHGDVVKYGSVIQLLHMKSNKYLTVNKRLPALLEKNAMRVTLDATGNEGSWLFIQPFWKLRSNGDNVVVGDKVILNPVNAGQPLHASNYELSDNAGCKEVNSVNCNTSWKINLFMQFRDHLEEVLKGGDVVRLFHAEQEKFLTCDEYRGKLQVFLRTTLRQSATSATSSNALWEVEVVHHDPCRGGAGHWNGLYRFKHLATGNYLAAEENPSYKGDASDPKAAGTGAQGRTGRRNAGEKIKYRLVAVPHGNDIASLFELDPTTLQKTDSFVPRNSYVRLRHLCTNTWIQSTNVPIDVEEERPIRLMLGTCPTKEDKEAFAIVSVPVSEIRDLDFANDASSMLASAVEKLHEGFISQNDRRFVIQLLEDLVFFVSDVPNNGQNVLDIMVTKPNRERQKLMREQNILKQIFGILKAPFRDKGGEGPLVRLEELSDQKNAPYQHMFRLCYRVLRHSQEDYRKNQEHIAKQFGMMQSQIGYDILAEDTITALLHNNRKLLEKHITKTEVETFVSLVRKNREPRFLDYLSDLCVSNHIAIPVTQELICKCVLDPKNSDILIQTELRPVKEMAQSHEYLSIEYSEEEVWLTWTDKNNEHHEKSVRQLAQEARAGNAHDENVLSYYRYQLKLFARMCLDRQYLAIDEISQQLGVDLIFLCMADEMLPFDLRASFCHLMLHVHVDRDPQELVTPVKFARLWTEIPTAITIKDYDSNLNASRDDKKNKFASTMEFVEDYLNNVVSEAVPFANEEKNKLTFEVVSLAHNLIYFGFYSFSELLRLTRTLLGIIDCVQAYEDPGGKNVRRSTQGVGHMMSTMVLNRKQSVFGGPSLPAGAGAPEPLDGSKFEENEDIVVMETKLKILEILQFILNVRLDYRISYLLSVFKKEFVEVFPMQDSGADGTAPAFDSTTANMNLDRIGEQAEAMFGVGKTSSMLEVDDEGGRMLLRVLIHLTMHDYAPLVSGALQLLFKHFSQRQEVMHTFKQVQLLISAQDVENYKVIKSELDRLRTMVEKSELWVDKKGASKGEEGEAGPAKDKKERPTDEEGFLHPPGEKSSENYQIVKGILERLNKMCGVGEQMRKKQQRLLKNMDAHKVMLDLLQIPYDKGDAKMMEILRYTHQFLQKFCAGNPGNQALLHKHLHLFLTPGLLEAETMQHIFLNNYQLCSEIGEPVLQHFVHLLATHGHHVQYLDFLHTVIKAEGKYVKKCQDMIMTEPANAGDDVVVFYNDKASLAHLLDMMKAARDGVEDHSPLMYHISLVDLLAACAEGKNVYTEIKCTSLLPLEDVVSVVTHEDCITEVKMAYVNFVNHCYVDTEVEMKEIYTSNHIWTLFENFTLDMARVCSKREKRLADPALEKYVLTVVLDTISAFFSSPFSENSTSLQTHQTIVVQLLQSTMRLLECPWLQQQHKGSVEACIRTLAMVAKGRAISLPMDLDAHISSLLSSGASCVAAAQRNASNYKTATRAFPRVMPTANQWDYKNIIEKLQDIITALEERLRPLVQAELSVLVDVLHWPELLFLEGSDAYQRCESGGFLSKLIQHTKDLMESEEKLCVKVLRTLQQMLLKKTKYGDRGNQLRKMLLQNYLQNRKSSSRGDLPDPMGTGLDQDWSAIAATQCRLDKEGATKLVCDLITSTKNEKIFQESIGLAIRLLDGGNTEIQKSFYNLMTSDKKSERFFKVLHDRMKRAQQETKSTVAVNMSDLGSQPREDREQADPTSKGRVASFSMPSSSSRYALGPSLRRGHEVGERVQSNEMGTSVLIMQPILRFLQLLCENHNRDLQNFLRCQNNKTNYNLVCETLQFLDIMCGSTTGGLGLLGLYINEDNVGLVIQTLETLTEYCQGPCHENQTCIVTHESNGIDIITALILNDISPLCKYRMDLVLQLKDNASKLLLALMESRHDSENAERILISLRPQELVDVIKKAYLQEEERENSDVSPREVGHNIYILALQLSRHNKQLQHLLKPVKRIQEEEAEGISSMLSLNNKQLTQMLKSSAPVQEQEEDPLAYYENHTSQIEIVRQDRSMEQIVFPVPGICQFLTEETKHRLFTTTEQDEQGSKVSDLFDQPSFLHNEMEWQRKLRSMPLIYWFSRRMTLWGSISFNLAVFINIIIAFFYPYVEGASTGVLGSPLISLLFWILICFSIAALFTKRYSVRPLIVALILRSIYYLGIGPTLNILGALNLTNKIVFVVSFVGNRGTFIRGYKAMVMDMEFLYHVGYILTSVLGLFAHELFYSILLFDLIYREETLFNVIKSVTRNGRSILLTALLALILVYLFSIVGFLFLKDDFILEVDRLPGNHSRANPLGMPHGAATFVNTCSGDNVDCVSGVSVPEVLAEDEEPDSTERACDTLLMCIVTVMNHGLRNGGGVGDILRKPSKDESLFPARVVYDLLFFFIVIIIVLNLIFGVIIDTFADLRSEKQKKEEILKTTCFICGLERDKFDNKTVSFEEHIKFEHNMWNYLYFIVLVRVKNKTDYTGPESYVAQMIKNKNLDWFPRMRAMSLVSSEGEGEQNEIRILQDKLSATMKLVSHLTAQLSELKEQMTEQRKRRQRLGFVDVQNCMSR.

At 1–2227 (MSEMSSFLHI…YVEGASTGVL (2227 aa)) the chain is on the cytoplasmic side. 5 consecutive MIR domains span residues 113–173 (GDVV…LRSN), 174–224 (GDNV…INLF), 232–288 (EEVL…VEVV), 295–372 (GGAG…LDPT), and 378–434 (DSFV…IVSV). Positions 266, 268, 269, and 270 each coordinate 1D-myo-inositol 1,4,5-trisphosphate. The segment at 320-344 (NPSYKGDASDPKAAGTGAQGRTGRR) is disordered. 1D-myo-inositol 1,4,5-trisphosphate contacts are provided by Arg503, Lys507, Arg510, Tyr567, Arg568, and Lys569. A Ca(2+)-binding site is contributed by Arg743. A phosphoserine mark is found at Ser909 and Ser927. Positions 1115 and 1118 each coordinate Ca(2+). Disordered stretches follow at residues 1124 to 1158 (KGAS…GEKS) and 1790 to 1850 (QQET…VGER). The span at 1792–1805 (ETKSTVAVNMSDLG) shows a compositional bias: polar residues. Residues Ser1806, Ser1825, and Ser1827 each carry the phosphoserine modification. Positions 1875 and 1939 each coordinate Ca(2+). ATP contacts are provided by Ala1989, Glu2142, and Lys2145. A helical transmembrane segment spans residues 2228–2248 (GSPLISLLFWILICFSIAALF). The Extracellular portion of the chain corresponds to 2249–2256 (TKRYSVRP). Residues 2257-2277 (LIVALILRSIYYLGIGPTLNI) form a helical membrane-spanning segment. The Cytoplasmic portion of the chain corresponds to 2278 to 2286 (LGALNLTNK). A helical membrane pass occupies residues 2287–2304 (IVFVVSFVGNRGTFIRGY). Residues 2305 to 2318 (KAMVMDMEFLYHVG) lie on the Extracellular side of the membrane. A helical membrane pass occupies residues 2319–2339 (YILTSVLGLFAHELFYSILLF). Over 2340–2361 (DLIYREETLFNVIKSVTRNGRS) the chain is Cytoplasmic. The chain crosses the membrane as a helical span at residues 2362-2382 (ILLTALLALILVYLFSIVGFL). Over 2383-2489 (FLKDDFILEV…ESLFPARVVY (107 aa)) the chain is Extracellular. Cys2448 and Cys2454 are disulfide-bonded. Residues 2490-2510 (DLLFFFIVIIIVLNLIFGVII) form a helical membrane-spanning segment. Over 2511 to 2664 (DTFADLRSEK…FVDVQNCMSR (154 aa)) the chain is Cytoplasmic. The ATP site is built by Cys2531 and Phe2532. A Zn(2+)-binding site is contributed by Cys2531. The Zn(2+) site is built by Cys2534 and His2551. Lys2553, His2556, Asn2557, and Met2558 together coordinate ATP. His2556 contributes to the Zn(2+) binding site. Residue Thr2574 participates in Ca(2+) binding. Phosphoserine is present on residues Ser2602 and Ser2663.

The protein belongs to the InsP3 receptor family. In terms of assembly, homotetramer. Homodimer. Interacts with TRPC1, TRPC3 and TRPC4. Interacts with TRPV4. Interacts with SIGMAR1. Interacts with PML and AKT1. Interacts with IRAG2 (via coiled-coil domain). Interacts with CABP1. Interacts with TMBIM4/LFG4. Interacts with CEMIP. Interacts with TESPA1. Interacts with TMEM203. Interacts with BOK; regulates ITPR3 expression. Interacts with BCL2L10. Interacts with CHGA and CHGB. Phosphorylated by AKT1 on serine and/or threonine residues.

The protein localises to the endoplasmic reticulum membrane. Its subcellular location is the cytoplasmic vesicle. It localises to the secretory vesicle membrane. It catalyses the reaction Ca(2+)(in) = Ca(2+)(out). With respect to regulation, inositol 1,4,5-trisphosphate-gated calcium channel is regulated by cytosolic calcium in a biphasic manner. At low concentrations, cytosolic calcium binds at a high-affinity juxtamembrane domain (JD) calcium binding site, allowing ITPR3 to activate by escaping a low-energy resting state through an ensemble of preactivated states. At high cytosolic calcium concentrations, ITPR3 preferentially enters an inhibited state stabilized by calcium binding at a second, low-affinity cytoplasmic domain (CD) calcium binding site. In terms of biological role, inositol 1,4,5-trisphosphate-gated calcium channel that, upon 1D-myo-inositol 1,4,5-trisphosphate binding, transports calcium from the endoplasmic reticulum lumen to cytoplasm, thus releasing the intracellular calcium and therefore participates in cellular calcium ion homeostasis. 1D-myo-inositol 1,4,5-trisphosphate binds to the ligand-free channel without altering its global conformation, yielding the low-energy resting state, then progresses through resting-to preactivated transitions to the higher energy preactivated state, which increases affinity for calcium, promoting binding of the low basal cytosolic calcium at the juxtamembrane domain (JD) site, favoring the transition through the ensemble of high-energy intermediate states along the trajectory to the fully-open activated state. Upon opening, releases calcium in the cytosol where it can bind to the low-affinity cytoplasmic domain (CD) site and stabilizes the inhibited state to terminate calcium release. The sequence is that of Inositol 1,4,5-trisphosphate-gated calcium channel ITPR3 from Bos taurus (Bovine).